We begin with the raw amino-acid sequence, 204 residues long: Venom allergen 5 (204 aa).

4 cysteine pairs are disulfide-bonded: cysteine 4–cysteine 17, cysteine 8–cysteine 101, cysteine 26–cysteine 94, and cysteine 170–cysteine 187. The region spanning 45-189 (LKEHNDFRQK…WHKHYLVCNY (145 aa)) is the SCP domain.

The protein belongs to the CRISP family. Venom allergen 5-like subfamily. As to expression, expressed by the venom gland.

The protein localises to the secreted. The polypeptide is Venom allergen 5 (Vespula maculifrons (Eastern yellow jacket)).